The chain runs to 742 residues: Zinc transporter ZIP6 (742 aa).

Over 1–353 (MMTFLCTRSG…QRNTPVYIAW (353 aa)) the chain is Extracellular. 2 N-linked (GlcNAc...) asparagine glycosylation sites follow: asparagine 94 and asparagine 127. Disordered regions lie at residues 148–182 (PVTT…SQSD) and 191–210 (MNQE…RSRR). Over residues 152–165 (KKGDMDHSVEKSDP) the composition is skewed to basic and acidic residues. Positions 192–206 (NQESTTALTTPSYVT) are enriched in polar residues. N-linked (GlcNAc...) asparagine glycans are attached at residues asparagine 212, asparagine 232, and asparagine 237. Residues 220-260 (TQDHASFSPSQPNVTHSNHTHHDEDTPTHQHDDHDEHEHAR) form a disordered region. Over residues 222 to 236 (DHASFSPSQPNVTHS) the composition is skewed to polar residues. The span at 239-260 (THHDEDTPTHQHDDHDEHEHAR) shows a compositional bias: basic and acidic residues. Residues asparagine 267 and asparagine 337 are each glycosylated (N-linked (GlcNAc...) asparagine). The tract at residues 310–342 (EDEHSDHSHHHKHHHHHHDHQHLQHPHNHTNGR) is disordered. Over residues 316–339 (HSHHHKHHHHHHDHQHLQHPHNHT) the composition is skewed to basic residues. A helical membrane pass occupies residues 354-374 (LGGFLSITLISLLALVGVVLI). The Cytoplasmic portion of the chain corresponds to 375–385 (PLMNRVCFNFL). Residues 386-406 (LSFLVALAVGTLSGDALLHLI) form a helical membrane-spanning segment. The Extracellular portion of the chain corresponds to 407–430 (PHSQGHHHHGHSEEHAEEEDSLRP). The helical transmembrane segment at 431–451 (VWTGLTALSGVYIMFLIEHFL) threads the bilayer. Residues 452-644 (TLGKMYKDKN…LKAGMSVRQA (193 aa)) lie on the Cytoplasmic side of the membrane. Residues 645–665 (MLYNLLSALMGYLGMIIGILI) form a helical membrane-spanning segment. Residues 666-671 (GHYAEN) lie on the Extracellular side of the membrane. Residues 672–692 (VATWIFALTAGLFMYVALVDM) form a helical membrane-spanning segment. Residues 693–710 (VPEMLHNDASEAGFSHYG) are Cytoplasmic-facing. A helical membrane pass occupies residues 711 to 731 (FFLLQNAGILLGFGIMLIIAV). The Extracellular portion of the chain corresponds to 732 to 742 (FEDRIQLDLGY).

It belongs to the ZIP transporter (TC 2.A.5) family. Cleaved on the N-terminus before locating to the plasma membrane. Post-translationally, N-glycosylated.

It is found in the cell membrane. The catalysed reaction is Zn(2+)(in) = Zn(2+)(out). In terms of biological role, acts as a zinc-influx transporter which plays a role in zinc homeostasis and in the induction of epithelial-to-mesenchymal transition (EMT). The chain is Zinc transporter ZIP6 from Danio rerio (Zebrafish).